Here is a 155-residue protein sequence, read N- to C-terminus: UPF0178 protein TDE_2151 (155 aa).

It belongs to the UPF0178 family.

The protein is UPF0178 protein TDE_2151 of Treponema denticola (strain ATCC 35405 / DSM 14222 / CIP 103919 / JCM 8153 / KCTC 15104).